The chain runs to 424 residues: S-adenosylmethionine synthase (424 aa).

His14 lines the ATP pocket. Position 16 (Asp16) interacts with Mg(2+). Residue Glu42 participates in K(+) binding. L-methionine is bound by residues Glu55 and Gln98. Residues 98-108 (QSNDISRGIER) are flexible loop. ATP-binding positions include 165 to 167 (DAK), 242 to 243 (KF), Asp251, 257 to 258 (RK), Ala274, and Lys278. Position 251 (Asp251) interacts with L-methionine. Lys282 provides a ligand contact to L-methionine.

Belongs to the AdoMet synthase family. In terms of assembly, homotetramer; dimer of dimers. The cofactor is Mg(2+). K(+) is required as a cofactor.

It is found in the cytoplasm. The enzyme catalyses L-methionine + ATP + H2O = S-adenosyl-L-methionine + phosphate + diphosphate. It participates in amino-acid biosynthesis; S-adenosyl-L-methionine biosynthesis; S-adenosyl-L-methionine from L-methionine: step 1/1. Functionally, catalyzes the formation of S-adenosylmethionine (AdoMet) from methionine and ATP. The overall synthetic reaction is composed of two sequential steps, AdoMet formation and the subsequent tripolyphosphate hydrolysis which occurs prior to release of AdoMet from the enzyme. In Azobacteroides pseudotrichonymphae genomovar. CFP2, this protein is S-adenosylmethionine synthase.